The primary structure comprises 254 residues: Putative ankyrin-containing lipoprotein Lxx09580 (254 aa).

Positions 1–22 (MTEIRYVRLLTLVLASSVLLAG) are cleaved as a signal peptide. Residue Cys23 is the site of N-palmitoyl cysteine attachment. Residue Cys23 is the site of S-diacylglycerol cysteine attachment. 5 ANK repeats span residues 56–85 (AATA…AIED), 89–118 (GGRT…DVNA), 122–151 (IQDS…DVNA), 155–184 (FNGT…DLDH), and 188–222 (PGWT…NPDI).

The protein resides in the cell membrane. In Leifsonia xyli subsp. xyli (strain CTCB07), this protein is Putative ankyrin-containing lipoprotein Lxx09580.